The following is a 167-amino-acid chain: MRCGSLCRFLWLWSCLSYIEAVPIQRVQDDTKTLIKTIITRINDISPPQGVCSRPRVAGLDFIPRVQSVRTLSGMDQILATYQQILTSLQSRSVVQIANDLANLRALLRLLASAKSCPVPRARGSDTIKGLGNVLRASVHSAEVVALSRLKAALQDMLRQLDRNPGC.

The first 21 residues, 1–21 (MRCGSLCRFLWLWSCLSYIEA), serve as a signal peptide directing secretion. Cys-117 and Cys-167 are disulfide-bonded.

This sequence belongs to the leptin family.

It localises to the secreted. Functionally, key player in the regulation of energy balance and body weight control. Once released into the circulation, has central and peripheral effects by binding LEPR, found in many tissues, which results in the activation of several major signaling pathways. In the hypothalamus, acts as an appetite-regulating factor that induces a decrease in food intake and an increase in energy consumption by inducing anorexinogenic factors and suppressing orexigenic neuropeptides, also regulates bone mass and secretion of hypothalamo-pituitary-adrenal hormones. In the periphery, increases basal metabolism, influences reproductive function, regulates pancreatic beta-cell function and insulin secretion, is pro-angiogenic for endothelial cell and affects innate and adaptive immunity. In the arcuate nucleus of the hypothalamus, activates by depolarization POMC neurons inducing FOS and SOCS3 expression to release anorexigenic peptides and inhibits by hyperpolarization NPY neurons inducing SOCS3 with a consequent reduction on release of orexigenic peptides. In addition to its known satiety inducing effect, has a modulatory role in nutrient absorption. In the intestine, reduces glucose absorption by enterocytes by activating PKC and leading to a sequential activation of p38, PI3K and ERK signaling pathways which exerts an inhibitory effect on glucose absorption. Acts as a growth factor on certain tissues, through the activation of different signaling pathways increases expression of genes involved in cell cycle regulation such as CCND1, via JAK2-STAT3 pathway, or VEGFA, via MAPK1/3 and PI3K-AKT1 pathways. May also play an apoptotic role via JAK2-STAT3 pathway and up-regulation of BIRC5 expression. Pro-angiogenic, has mitogenic activity on vascular endothelial cells and plays a role in matrix remodeling by regulating the expression of matrix metalloproteinases (MMPs) and tissue inhibitors of metalloproteinases (TIMPs). In innate immunity, modulates the activity and function of neutrophils by increasing chemotaxis and the secretion of oxygen radicals. Increases phagocytosis by macrophages and enhances secretion of pro-inflammatory mediators. Increases cytotoxic ability of NK cells. Plays a pro-inflammatory role, in synergy with IL1B, by inducing NOS2 which promotes the production of IL6, IL8 and Prostaglandin E2, through a signaling pathway that involves JAK2, PI3K, MAP2K1/MEK1 and MAPK14/p38. In adaptive immunity, promotes the switch of memory T-cells towards T helper-1 cell immune responses. Increases CD4(+)CD25(-) T-cell proliferation and reduces autophagy during TCR (T-cell receptor) stimulation, through MTOR signaling pathway activation and BCL2 up-regulation. This chain is Leptin (LEP), found in Phoca vitulina (Harbor seal).